The chain runs to 125 residues: Large ribosomal subunit protein bL20 (125 aa).

This sequence belongs to the bacterial ribosomal protein bL20 family.

Functionally, binds directly to 23S ribosomal RNA and is necessary for the in vitro assembly process of the 50S ribosomal subunit. It is not involved in the protein synthesizing functions of that subunit. In Rhodospirillum rubrum (strain ATCC 11170 / ATH 1.1.1 / DSM 467 / LMG 4362 / NCIMB 8255 / S1), this protein is Large ribosomal subunit protein bL20.